Consider the following 1694-residue polypeptide: Immunoglobulin A1 protease autotransporter (1694 aa).

The N-terminal stretch at 1-25 (MLNKKFKLNFIALTVAYALTPYTEA) is a signal peptide. Positions 26 to 332 (ALVRDDVDYQ…NIYKPEFAKT (307 aa)) constitute a Peptidase S6 domain. Ser-288 is a catalytic residue. A disordered region spans residues 991–1403 (VEKRNQTVDT…GSDRSTVALR (413 aa)). Residues 997–1021 (TVDTTNITTPNNIQADVPSVPSNNE) are compositionally biased toward polar residues. The segment covering 1037–1047 (TPSETTETVAE) has biased composition (low complexity). A compositionally biased stretch (basic and acidic residues) spans 1049–1061 (SKQESKTVEKNEQ). Residues 1082-1095 (KANTQTNEVAQSGS) show a composition bias toward polar residues. Basic and acidic residues-rich tracts occupy residues 1104–1124 (EIKE…KDEI) and 1142–1154 (APKE…KVEE). Polar residues-rich tracts occupy residues 1155 to 1178 (TQVQ…SPNS) and 1199 to 1210 (VSKNQTENTTDQ). Residues 1211-1226 (PTEREKTAKVETEKTQ) show a composition bias toward basic and acidic residues. 3 stretches are compositionally biased toward polar residues: residues 1227–1247 (EPPQ…TVQP), 1255–1297 (NVPT…TAIT), and 1308–1336 (TETA…NSES). Over residues 1352–1370 (ETSAEETTAASTDETTIAD) the composition is skewed to low complexity. The segment covering 1374–1384 (RSKPNRRSRRS) has biased composition (basic residues). The Autotransporter domain maps to 1442-1694 (NNEGQYNVWV…TAELKLSFSF (253 aa)).

The protein resides in the periplasm. It localises to the secreted. It is found in the cell surface. The protein localises to the cell outer membrane. The enzyme catalyses Cleavage of immunoglobulin A molecules at certain Pro-|-Xaa bonds in the hinge region. No small molecule substrates are known.. Functionally, virulence factor; cleaves host immunoglobulin A producing intact Fc and Fab fragments. In Haemophilus influenzae (strain ATCC 51907 / DSM 11121 / KW20 / Rd), this protein is Immunoglobulin A1 protease autotransporter (iga).